The sequence spans 1405 residues: DNA-directed RNA polymerase III subunit rpc1 (1405 aa).

Residues C66, C69, C76, H79, C106, C109, and C153 each contribute to the Zn(2+) site. Residues D493, D495, and D497 each coordinate Mg(2+). A bridging helix region spans residues 838 to 850; sequence PTEFLFHAISGRE.

It belongs to the RNA polymerase beta' chain family. As to quaternary structure, component of the RNA polymerase III (Pol III) complex consisting of 17 subunits.

The protein localises to the nucleus. It carries out the reaction RNA(n) + a ribonucleoside 5'-triphosphate = RNA(n+1) + diphosphate. DNA-dependent RNA polymerase catalyzes the transcription of DNA into RNA using the four ribonucleoside triphosphates as substrates. Largest and catalytic core component of RNA polymerase III which synthesizes small RNAs, such as 5S rRNA and tRNAs. Forms the polymerase active center together with the second largest subunit. A single-stranded DNA template strand of the promoter is positioned within the central active site cleft of Pol III. A bridging helix emanates from RPC1 and crosses the cleft near the catalytic site and is thought to promote translocation of Pol III by acting as a ratchet that moves the RNA-DNA hybrid through the active site by switching from straight to bent conformations at each step of nucleotide addition. The chain is DNA-directed RNA polymerase III subunit rpc1 (rpc1) from Schizosaccharomyces pombe (strain 972 / ATCC 24843) (Fission yeast).